A 469-amino-acid chain; its full sequence is Ribulose bisphosphate carboxylase large chain (469 aa).

K5 is modified (N6,N6,N6-trimethyllysine). N114 and T164 together coordinate substrate. Residue K166 is the Proton acceptor of the active site. K168 is a substrate binding site. Mg(2+) is bound by residues K192, D194, and E195. K192 is subject to N6-carboxylysine. The active-site Proton acceptor is H285. Residues R286, H318, and S370 each coordinate substrate.

Belongs to the RuBisCO large chain family. Type I subfamily. Heterohexadecamer of 8 large chains and 8 small chains; disulfide-linked. The disulfide link is formed within the large subunit homodimers. Mg(2+) serves as cofactor. In terms of processing, the disulfide bond which can form in the large chain dimeric partners within the hexadecamer appears to be associated with oxidative stress and protein turnover.

The protein resides in the plastid. Its subcellular location is the chloroplast. It catalyses the reaction 2 (2R)-3-phosphoglycerate + 2 H(+) = D-ribulose 1,5-bisphosphate + CO2 + H2O. It carries out the reaction D-ribulose 1,5-bisphosphate + O2 = 2-phosphoglycolate + (2R)-3-phosphoglycerate + 2 H(+). Its function is as follows. RuBisCO catalyzes two reactions: the carboxylation of D-ribulose 1,5-bisphosphate, the primary event in carbon dioxide fixation, as well as the oxidative fragmentation of the pentose substrate in the photorespiration process. Both reactions occur simultaneously and in competition at the same active site. In Nicandra physalodes (Apple-of-Peru), this protein is Ribulose bisphosphate carboxylase large chain.